The sequence spans 338 residues: Ketol-acid reductoisomerase (NADP(+)) (338 aa).

Positions 1 to 181 constitute a KARI N-terminal Rossmann domain; the sequence is MKVSYDKDCD…GGGRTGIIET (181 aa). NADP(+) is bound by residues 24 to 27, Arg-47, Ser-50, Ser-52, and 82 to 85; these read YGSQ and DEFQ. His-107 is an active-site residue. Gly-133 is an NADP(+) binding site. The region spanning 182–327 is the KARI C-terminal knotted domain; sequence TFKDETETDL…EKLRAMMPWI (146 aa). Mg(2+) is bound by residues Asp-190, Glu-194, Glu-226, and Glu-230. Position 251 (Ser-251) interacts with substrate.

It belongs to the ketol-acid reductoisomerase family. Mg(2+) is required as a cofactor.

It catalyses the reaction (2R)-2,3-dihydroxy-3-methylbutanoate + NADP(+) = (2S)-2-acetolactate + NADPH + H(+). The enzyme catalyses (2R,3R)-2,3-dihydroxy-3-methylpentanoate + NADP(+) = (S)-2-ethyl-2-hydroxy-3-oxobutanoate + NADPH + H(+). The protein operates within amino-acid biosynthesis; L-isoleucine biosynthesis; L-isoleucine from 2-oxobutanoate: step 2/4. It functions in the pathway amino-acid biosynthesis; L-valine biosynthesis; L-valine from pyruvate: step 2/4. Involved in the biosynthesis of branched-chain amino acids (BCAA). Catalyzes an alkyl-migration followed by a ketol-acid reduction of (S)-2-acetolactate (S2AL) to yield (R)-2,3-dihydroxy-isovalerate. In the isomerase reaction, S2AL is rearranged via a Mg-dependent methyl migration to produce 3-hydroxy-3-methyl-2-ketobutyrate (HMKB). In the reductase reaction, this 2-ketoacid undergoes a metal-dependent reduction by NADPH to yield (R)-2,3-dihydroxy-isovalerate. The protein is Ketol-acid reductoisomerase (NADP(+)) of Stutzerimonas stutzeri (strain A1501) (Pseudomonas stutzeri).